The primary structure comprises 363 residues: Mitogen-activated protein kinase 12 (363 aa).

The Protein kinase domain occupies Y25–F309. Residues V31–V39 and K54 each bind ATP. The Proton acceptor role is filled by D151. A Phosphothreonine modification is found at T181. The TXY signature appears at T181 to Y183. The residue at position 183 (Y183) is a Phosphotyrosine.

It belongs to the protein kinase superfamily. CMGC Ser/Thr protein kinase family. MAP kinase subfamily. Mg(2+) is required as a cofactor. In terms of processing, dually phosphorylated on Thr-181 and Tyr-183, which activates the enzyme.

It localises to the cytoplasm. It carries out the reaction L-seryl-[protein] + ATP = O-phospho-L-seryl-[protein] + ADP + H(+). It catalyses the reaction L-threonyl-[protein] + ATP = O-phospho-L-threonyl-[protein] + ADP + H(+). With respect to regulation, activated by threonine and tyrosine phosphorylation. Serine/threonine kinase which acts as an essential component of the MAP kinase signal transduction pathway. MAPK12 is one of the four p38 MAPKs which play an important role in the cascades of cellular responses evoked by extracellular stimuli such as pro-inflammatory cytokines or physical stress leading to direct activation of transcription factors. Accordingly, p38 MAPKs phosphorylate a broad range of proteins and it has been estimated that they may have approximately 200 to 300 substrates each. Some of the targets are downstream kinases such as MAPKAPK2, which are activated through phosphorylation and further phosphorylate additional targets. The polypeptide is Mitogen-activated protein kinase 12 (mapk12) (Danio rerio (Zebrafish)).